A 548-amino-acid polypeptide reads, in one-letter code: Luciferin 4-monooxygenase (548 aa).

The Microbody targeting signal motif lies at 546 to 548 (AKM).

Belongs to the ATP-dependent AMP-binding enzyme family. Mg(2+) serves as cofactor.

The protein localises to the peroxisome. It carries out the reaction firefly D-luciferin + ATP + O2 = firefly oxyluciferin + hnu + AMP + CO2 + diphosphate. Functionally, produces green light with a wavelength of 544 nm. In Nipponoluciola cruciata (Genji firefly), this protein is Luciferin 4-monooxygenase.